The chain runs to 1465 residues: DNA polymerase III PolC-type (1465 aa).

Positions 425–581 (YVVFDVETTG…YDAEATGRLL (157 aa)) constitute an Exonuclease domain.

Belongs to the DNA polymerase type-C family. PolC subfamily.

It localises to the cytoplasm. It carries out the reaction DNA(n) + a 2'-deoxyribonucleoside 5'-triphosphate = DNA(n+1) + diphosphate. Functionally, required for replicative DNA synthesis. This DNA polymerase also exhibits 3' to 5' exonuclease activity. The polypeptide is DNA polymerase III PolC-type (Streptococcus mutans serotype c (strain ATCC 700610 / UA159)).